A 505-amino-acid chain; its full sequence is Maturase K (505 aa).

It belongs to the intron maturase 2 family. MatK subfamily.

It localises to the plastid. The protein resides in the chloroplast. Usually encoded in the trnK tRNA gene intron. Probably assists in splicing its own and other chloroplast group II introns. In Rosa stellata (Star rose), this protein is Maturase K.